The chain runs to 129 residues: SOSS complex subunit C homolog (129 aa).

The disordered stretch occupies residues 105-129 (RLEPLPSPATTPTTPNAPPSHNISK).

Belongs to the SOSS-C family.

The protein is SOSS complex subunit C homolog of Drosophila erecta (Fruit fly).